The chain runs to 90 residues: Exodeoxyribonuclease 7 small subunit (90 aa).

Residues 62–90 (QDGQANPMSSQGHTAGEYPDDEAEEAEEA) form a disordered region. The span at 64–74 (GQANPMSSQGH) shows a compositional bias: polar residues. Over residues 79–90 (YPDDEAEEAEEA) the composition is skewed to acidic residues.

Belongs to the XseB family. As to quaternary structure, heterooligomer composed of large and small subunits.

The protein resides in the cytoplasm. The catalysed reaction is Exonucleolytic cleavage in either 5'- to 3'- or 3'- to 5'-direction to yield nucleoside 5'-phosphates.. In terms of biological role, bidirectionally degrades single-stranded DNA into large acid-insoluble oligonucleotides, which are then degraded further into small acid-soluble oligonucleotides. The sequence is that of Exodeoxyribonuclease 7 small subunit from Desulfovibrio desulfuricans (strain ATCC 27774 / DSM 6949 / MB).